The following is a 413-amino-acid chain: Cardiolipin synthase B (413 aa).

PLD phosphodiesterase domains are found at residues 108–135 and 285–312; these read IFRR…SAEH and RRRP…DPLS. Residues His-113, Lys-115, Asp-120, His-290, Lys-292, and Asp-297 contribute to the active site. The segment at 388–413 is disordered; that stretch reads AQVPPPAQPEMETQDRVDPENSGVKP.

It belongs to the phospholipase D family. Cardiolipin synthase subfamily. ClsB sub-subfamily.

The protein localises to the cell membrane. It carries out the reaction 2 a 1,2-diacyl-sn-glycero-3-phospho-(1'-sn-glycerol) = a cardiolipin + glycerol. In terms of biological role, catalyzes the phosphatidyl group transfer from one phosphatidylglycerol molecule to another to form cardiolipin (CL) (diphosphatidylglycerol) and glycerol. The sequence is that of Cardiolipin synthase B from Salmonella typhi.